The primary structure comprises 242 residues: Methylthioribulose-1-phosphate dehydratase (242 aa).

Basic and acidic residues predominate over residues 1–11 (MAQEIQKENND). The segment at 1–20 (MAQEIQKENNDHLVQSSDPE) is disordered. Cys100 lines the substrate pocket. Positions 117 and 119 each coordinate Zn(2+). The active-site Proton donor/acceptor is Glu146. A Zn(2+)-binding site is contributed by His202.

Belongs to the aldolase class II family. MtnB subfamily. Zn(2+) is required as a cofactor.

It localises to the cytoplasm. It catalyses the reaction 5-(methylsulfanyl)-D-ribulose 1-phosphate = 5-methylsulfanyl-2,3-dioxopentyl phosphate + H2O. Its pathway is amino-acid biosynthesis; L-methionine biosynthesis via salvage pathway; L-methionine from S-methyl-5-thio-alpha-D-ribose 1-phosphate: step 2/6. Functionally, catalyzes the dehydration of methylthioribulose-1-phosphate (MTRu-1-P) into 2,3-diketo-5-methylthiopentyl-1-phosphate (DK-MTP-1-P). In Aspergillus niger (strain ATCC MYA-4892 / CBS 513.88 / FGSC A1513), this protein is Methylthioribulose-1-phosphate dehydratase.